The following is a 393-amino-acid chain: Actin-related protein 2 (393 aa).

ATP is bound by residues 158–160 (GDG), 212–216 (RQMKE), and 303–308 (GGTTMY).

Belongs to the actin family. ARP2 subfamily. In terms of assembly, component of the Arp2/3 complex.

Its subcellular location is the cytoplasm. The protein resides in the cytoskeleton. Functions as ATP-binding component of the Arp2/3 complex which is involved in regulation of actin polymerization and together with an activating nucleation-promoting factor (NPF) mediates the formation of branched actin networks. Seems to contact the pointed end of the daughter actin filament. This Caenorhabditis briggsae protein is Actin-related protein 2 (arx-2).